A 343-amino-acid chain; its full sequence is E3 ubiquitin-protein ligase RNF113A (343 aa).

Ala-2 carries the N-acetylalanine modification. Residues 2–60 (AEQLSPGKTTDQVCTFLFKKPGRKVAAGRRKRPICNQESGDSSSSSDEGNTVVRPEKKR) form an important for interaction with SNRNP200/BRR2 region. Phosphoserine is present on Ser-6. Residues 23–34 (GRKVAAGRRKRP) show a composition bias toward basic residues. The tract at residues 23-95 (GRKVAAGRRK…EEEEENKSES (73 aa)) is disordered. Positions 39 to 50 (ESGDSSSSSDEG) are enriched in low complexity. The tract at residues 50 to 61 (GNTVVRPEKKRA) is important for interaction with CXCR4. Ser-84 and Ser-85 each carry phosphoserine. The segment at 196-224 (DYQPDICKDYKETGFCGFGDSCKFLHDRS) adopts a C3H1-type zinc-finger fold. At Ser-253 the chain carries Phosphoserine. An RING-type zinc finger spans residues 262–300 (CFICRQTFQNPVVTKCRHYFCESCALQHFRTTPRCYVCD). A disordered region spans residues 323 to 343 (AEGGGASGFPEDPDEDPVPIT). Over residues 333-343 (EDPDEDPVPIT) the composition is skewed to acidic residues.

Component of pre-catalytic and catalytic spliceosome complexes. Interacts (via N-terminus) with the spliceosome subunit SNRNP200/BRR2. Component of the minor spliceosome. Within this complex, interacts with SCNM1 and CRIPT.

The protein resides in the nucleus. It is found in the nucleus speckle. It carries out the reaction S-ubiquitinyl-[E2 ubiquitin-conjugating enzyme]-L-cysteine + [acceptor protein]-L-lysine = [E2 ubiquitin-conjugating enzyme]-L-cysteine + N(6)-ubiquitinyl-[acceptor protein]-L-lysine.. Its pathway is protein modification; protein ubiquitination. In terms of biological role, required for pre-mRNA splicing as component of the spliceosome. As a component of the minor spliceosome, involved in the splicing of U12-type introns in pre-mRNAs. E3 ubiquitin-protein ligase that catalyzes the transfer of ubiquitin onto target proteins. Catalyzes polyubiquitination of SNRNP200/BRR2 with non-canonical 'Lys-63'-linked polyubiquitin chains. Plays a role in DNA repair via its role in the synthesis of 'Lys-63'-linked polyubiquitin chains that recruit ALKBH3 and the ASCC complex to sites of DNA damage by alkylating agents. Ubiquitinates CXCR4, leading to its degradation, and thereby contributes to the termination of CXCR4 signaling. This is E3 ubiquitin-protein ligase RNF113A (RNF113A) from Bos taurus (Bovine).